The chain runs to 307 residues: Olfactory receptor 12D2 (307 aa).

The Extracellular portion of the chain corresponds to 1-23 (MLNTTSVTEFLLLGVTDIQELQP). A glycan (N-linked (GlcNAc...) asparagine) is linked at asparagine 3. A helical transmembrane segment spans residues 24–44 (FLFVVFLTIYFISVTGNGAVL). Over 45-52 (MIVISDPR) the chain is Cytoplasmic. The chain crosses the membrane as a helical span at residues 53–73 (LHSLMYFFLGNLSYLDICYST). Over 74-97 (VTLPKMLQNFLSTHKAISFLGCIS) the chain is Extracellular. Residues cysteine 95 and cysteine 187 are joined by a disulfide bond. The chain crosses the membrane as a helical span at residues 98–118 (QLHFFHSLGSTESMLFAVMAF). Residues 119–137 (DLSVAICKPLRYTVIMNPQ) are Cytoplasmic-facing. A helical transmembrane segment spans residues 138 to 158 (LCTQMAITIWVIGFFHALLHS). The Extracellular segment spans residues 159-195 (VMTSRLNFCGSNRIHHFLCDIKPLLKLACGNTELNQW). A helical membrane pass occupies residues 196–215 (LLSTVTGTIAMGPFFLTLLS). Topologically, residues 216–236 (YFYIITYLFFKTRSCSMLCKA) are cytoplasmic. Residues 237–257 (LSTCASHFMVVILFYAPVLFT) form a helical membrane-spanning segment. At 258-270 (YIHPALESFMDQD) the chain is on the extracellular side. Residues 271-291 (RIVAIMYTVVTPVLNPLIYTL) form a helical membrane-spanning segment. The Cytoplasmic portion of the chain corresponds to 292-307 (RNKEVKGALGRVIRRL).

Belongs to the G-protein coupled receptor 1 family.

The protein resides in the cell membrane. Functionally, odorant receptor. The polypeptide is Olfactory receptor 12D2 (OR12D2) (Homo sapiens (Human)).